A 228-amino-acid chain; its full sequence is Cytochrome b-c1 complex subunit Rieske, mitochondrial (228 aa).

A mitochondrion-targeting transit peptide spans 1-26 (MLAKQFISKSLASSLRRLLPVSSTAS). At 27-63 (SLKGSMMTIPKFTSIRTYTDSPEMPDFSEYQTKSTGD) the chain is on the mitochondrial matrix side. A helical membrane pass occupies residues 64–93 (RSRVISYAMVGTMGALTAAGAQATVHDFLA). The Mitochondrial intermembrane portion of the chain corresponds to 94-228 (SWSASADVLA…TFEGSKIIIG (135 aa)). The Rieske domain maps to 139-227 (IQEANSVDIS…YTFEGSKIII (89 aa)). [2Fe-2S] cluster-binding residues include Cys-172, His-174, Cys-191, and His-194. Residues Cys-177 and Cys-193 are joined by a disulfide bond.

It belongs to the Rieske iron-sulfur protein family. In terms of assembly, component of the ubiquinol-cytochrome c oxidoreductase (cytochrome b-c1 complex, complex III, CIII), a multisubunit enzyme composed of 3 respiratory subunits cytochrome b, cytochrome c1 and Rieske protein, 2 core protein subunits, and additional low-molecular weight protein subunits. The complex exists as an obligatory dimer and forms supercomplexes (SCs) in the inner mitochondrial membrane with cytochrome c oxidase (complex IV, CIV). Requires [2Fe-2S] cluster as cofactor.

The protein resides in the mitochondrion inner membrane. It carries out the reaction a quinol + 2 Fe(III)-[cytochrome c](out) = a quinone + 2 Fe(II)-[cytochrome c](out) + 2 H(+)(out). Its function is as follows. Component of the ubiquinol-cytochrome c oxidoreductase, a multisubunit transmembrane complex that is part of the mitochondrial electron transport chain which drives oxidative phosphorylation. The respiratory chain contains 3 multisubunit complexes succinate dehydrogenase (complex II, CII), ubiquinol-cytochrome c oxidoreductase (cytochrome b-c1 complex, complex III, CIII) and cytochrome c oxidase (complex IV, CIV), that cooperate to transfer electrons derived from NADH and succinate to molecular oxygen, creating an electrochemical gradient over the inner membrane that drives transmembrane transport and the ATP synthase. The cytochrome b-c1 complex catalyzes electron transfer from ubiquinol to cytochrome c, linking this redox reaction to translocation of protons across the mitochondrial inner membrane, with protons being carried across the membrane as hydrogens on the quinol. In the process called Q cycle, 2 protons are consumed from the matrix, 4 protons are released into the intermembrane space and 2 electrons are passed to cytochrome c. The Rieske protein is a catalytic core subunit containing a [2Fe-2S] iron-sulfur cluster. It cycles between 2 conformational states during catalysis to transfer electrons from the quinol bound in the Q(0) site in cytochrome b to cytochrome c1. The chain is Cytochrome b-c1 complex subunit Rieske, mitochondrial (rip1) from Schizosaccharomyces pombe (strain 972 / ATCC 24843) (Fission yeast).